A 154-amino-acid polypeptide reads, in one-letter code: Aspartate carbamoyltransferase regulatory chain (154 aa).

4 residues coordinate Zn(2+): Cys109, Cys114, Cys138, and Cys141.

It belongs to the PyrI family. In terms of assembly, contains catalytic and regulatory chains. The cofactor is Zn(2+).

Its function is as follows. Involved in allosteric regulation of aspartate carbamoyltransferase. The polypeptide is Aspartate carbamoyltransferase regulatory chain (Yersinia pestis).